The primary structure comprises 94 residues: Large ribosomal subunit protein bL28 (94 aa).

The disordered stretch occupies residues 1–21 (MARRCEVTGRGTVSGNNVSHS). The span at 11–20 (GTVSGNNVSH) shows a compositional bias: polar residues.

This sequence belongs to the bacterial ribosomal protein bL28 family.

The sequence is that of Large ribosomal subunit protein bL28 from Leptospira interrogans serogroup Icterohaemorrhagiae serovar copenhageni (strain Fiocruz L1-130).